Consider the following 505-residue polypeptide: ATP synthase subunit alpha (505 aa).

170–177 (GDRQTGKT) serves as a coordination point for ATP.

This sequence belongs to the ATPase alpha/beta chains family. As to quaternary structure, F-type ATPases have 2 components, CF(1) - the catalytic core - and CF(0) - the membrane proton channel. CF(1) has five subunits: alpha(3), beta(3), gamma(1), delta(1), epsilon(1). CF(0) has four main subunits: a(1), b(1), b'(1) and c(9-12).

It localises to the cellular thylakoid membrane. The enzyme catalyses ATP + H2O + 4 H(+)(in) = ADP + phosphate + 5 H(+)(out). Its function is as follows. Produces ATP from ADP in the presence of a proton gradient across the membrane. The alpha chain is a regulatory subunit. The polypeptide is ATP synthase subunit alpha (Prochlorococcus marinus (strain MIT 9515)).